Consider the following 491-residue polypeptide: Monodehydroascorbate reductase 5, chlorplastic (491 aa).

The N-terminal 42 residues, 1–42, are a transit peptide targeting the chloroplast; that stretch reads MASTAAAASSQGCISWALRQRGLGGGGARAVPVLPRRRFCVS. Residues 61–64, Glu88, Arg95, Lys100, and 194–195 contribute to the FAD site; these read GGNA and RD. NAD(+) contacts are provided by residues 217–223, Glu241, Arg247, and Gly306; that span reads GGYIGME. 219–223 contacts NADP(+); that stretch reads YIGME. NADP(+) contacts are provided by Arg247 and Gly306. Asp344 contributes to the FAD binding site. 360 to 361 serves as a coordination point for NAD(+); sequence EH. 360–361 lines the NADP(+) pocket; sequence EH. Val362 contacts FAD. Arg366 provides a ligand contact to L-ascorbate. FAD is bound at residue Tyr391. NAD(+) is bound at residue Tyr391. NADP(+) is bound at residue Tyr391. Arg393 serves as a coordination point for L-ascorbate.

The protein belongs to the FAD-dependent oxidoreductase family. It depends on FAD as a cofactor.

The protein localises to the plastid. Its subcellular location is the chloroplast. It carries out the reaction 2 monodehydro-L-ascorbate radical + NADH + H(+) = 2 L-ascorbate + NAD(+). In terms of biological role, catalyzes the conversion of monodehydroascorbate to ascorbate, oxidizing NADH in the process. Ascorbate is a major antioxidant against reactive oxygen species (ROS) and nitric oxide (NO). In Oryza sativa subsp. japonica (Rice), this protein is Monodehydroascorbate reductase 5, chlorplastic.